We begin with the raw amino-acid sequence, 346 residues long: tRNA N6-adenosine threonylcarbamoyltransferase (346 aa).

The Fe cation site is built by His111 and His115. Substrate is bound by residues 134-138 (LVSGG), Asp167, Gly180, Asp184, and Asn279. Asp307 contributes to the Fe cation binding site.

The protein belongs to the KAE1 / TsaD family. Requires Fe(2+) as cofactor.

It localises to the cytoplasm. The catalysed reaction is L-threonylcarbamoyladenylate + adenosine(37) in tRNA = N(6)-L-threonylcarbamoyladenosine(37) in tRNA + AMP + H(+). Functionally, required for the formation of a threonylcarbamoyl group on adenosine at position 37 (t(6)A37) in tRNAs that read codons beginning with adenine. Is involved in the transfer of the threonylcarbamoyl moiety of threonylcarbamoyl-AMP (TC-AMP) to the N6 group of A37, together with TsaE and TsaB. TsaD likely plays a direct catalytic role in this reaction. In Nostoc sp. (strain PCC 7120 / SAG 25.82 / UTEX 2576), this protein is tRNA N6-adenosine threonylcarbamoyltransferase.